The following is a 199-amino-acid chain: Thymidine kinase (199 aa).

ATP-binding positions include 9–16 (GAMSSGKT) and 93–96 (DEAQ). Glutamate 94 (proton acceptor) is an active-site residue. 4 residues coordinate Zn(2+): cysteine 151, cysteine 154, cysteine 188, and histidine 191.

This sequence belongs to the thymidine kinase family. Homotetramer.

It localises to the cytoplasm. The catalysed reaction is thymidine + ATP = dTMP + ADP + H(+). This Lactobacillus acidophilus (strain ATCC 700396 / NCK56 / N2 / NCFM) protein is Thymidine kinase.